The sequence spans 486 residues: NADH-quinone oxidoreductase subunit N (486 aa).

Helical transmembrane passes span 8–28, 36–56, 74–94, 104–124, 125–145, 160–180, 201–221, 239–259, 269–289, 298–318, 329–349, 376–396, 410–432, and 459–479; these read LTAL…ILSI, FVAV…YFLI, ILYI…SYPW, EFYL…ISHH, MASF…LIAY, IILS…VYSI, ILVV…KLSI, VLSF…LNFL, VIYF…NLMA, FLGY…LVSH, AIYL…VNLI, SVLT…GFIG, WLIG…RIIL, and IVIC…NPLI.

It belongs to the complex I subunit 2 family. In terms of assembly, NDH-1 is composed of 13 different subunits. Subunits NuoA, H, J, K, L, M, N constitute the membrane sector of the complex.

The protein localises to the cell membrane. The catalysed reaction is a quinone + NADH + 5 H(+)(in) = a quinol + NAD(+) + 4 H(+)(out). Its function is as follows. NDH-1 shuttles electrons from NADH, via FMN and iron-sulfur (Fe-S) centers, to quinones in the respiratory chain. The immediate electron acceptor for the enzyme in this species is believed to be ubiquinone. Couples the redox reaction to proton translocation (for every two electrons transferred, four hydrogen ions are translocated across the cytoplasmic membrane), and thus conserves the redox energy in a proton gradient. The chain is NADH-quinone oxidoreductase subunit N from Buchnera aphidicola subsp. Acyrthosiphon pisum (strain APS) (Acyrthosiphon pisum symbiotic bacterium).